The following is a 204-amino-acid chain: Ras-related protein RabL (204 aa).

14 to 21 (GDSNVGKT) is a GTP binding site. The Effector region signature appears at 36–44 (RPPSIGPDY). Residues 62-66 (DTCGQ) and 120-123 (TKSD) contribute to the GTP site. 2 S-geranylgeranyl cysteine lipidation sites follow: Cys-203 and Cys-204.

Belongs to the small GTPase superfamily. Rab family.

It is found in the cell membrane. The protein is Ras-related protein RabL (rabL) of Dictyostelium discoideum (Social amoeba).